A 221-amino-acid chain; its full sequence is Chalcone--flavanone isomerase 2 (221 aa).

Substrate-binding residues include Thr-50, Asn-115, and Ser-192.

This sequence belongs to the chalcone isomerase family.

It catalyses the reaction a chalcone = a flavanone.. It participates in secondary metabolite biosynthesis; flavonoid biosynthesis. Its function is as follows. Catalyzes the intramolecular cyclization of bicyclic chalcones into tricyclic (S)-flavanones. Responsible for the isomerization of 4,2',4',6'-tetrahydroxychalcone (also termed chalcone) into naringenin. This Lotus japonicus (Lotus corniculatus var. japonicus) protein is Chalcone--flavanone isomerase 2 (CHI2).